Consider the following 313-residue polypeptide: Tagatose-6-phosphate kinase (313 aa).

The protein belongs to the carbohydrate kinase PfkB family. LacC subfamily.

The enzyme catalyses D-tagatofuranose 6-phosphate + ATP = D-tagatofuranose 1,6-bisphosphate + ADP + H(+). It functions in the pathway carbohydrate metabolism; D-tagatose 6-phosphate degradation; D-glyceraldehyde 3-phosphate and glycerone phosphate from D-tagatose 6-phosphate: step 1/2. In Enterococcus faecalis (strain ATCC 700802 / V583), this protein is Tagatose-6-phosphate kinase.